The primary structure comprises 173 residues: Flavodoxin (173 aa).

Residues 2–168 (IGIFFSTSTG…RVAGWVEAVV (167 aa)) form the Flavodoxin-like domain.

Belongs to the flavodoxin family. FMN serves as cofactor.

In terms of biological role, low-potential electron donor to a number of redox enzymes. This is Flavodoxin from Chondrus crispus (Carrageen Irish moss).